The sequence spans 432 residues: Peptidase B (432 aa).

Residues K196 and D201 each contribute to the Mn(2+) site. K208 is an active-site residue. Positions 219, 278, and 280 each coordinate Mn(2+). R282 is a catalytic residue.

This sequence belongs to the peptidase M17 family. Homohexamer. Mn(2+) serves as cofactor.

The protein resides in the cytoplasm. The catalysed reaction is Release of an N-terminal amino acid, Xaa, from a peptide or arylamide. Xaa is preferably Glu or Asp but may be other amino acids, including Leu, Met, His, Cys and Gln.. Its function is as follows. Probably plays an important role in intracellular peptide degradation. In Yersinia pseudotuberculosis serotype O:1b (strain IP 31758), this protein is Peptidase B.